The chain runs to 74 residues: Exodeoxyribonuclease 7 small subunit (74 aa).

This sequence belongs to the XseB family. Heterooligomer composed of large and small subunits.

It localises to the cytoplasm. It carries out the reaction Exonucleolytic cleavage in either 5'- to 3'- or 3'- to 5'-direction to yield nucleoside 5'-phosphates.. Functionally, bidirectionally degrades single-stranded DNA into large acid-insoluble oligonucleotides, which are then degraded further into small acid-soluble oligonucleotides. This Bdellovibrio bacteriovorus (strain ATCC 15356 / DSM 50701 / NCIMB 9529 / HD100) protein is Exodeoxyribonuclease 7 small subunit.